Reading from the N-terminus, the 137-residue chain is Nucleoside diphosphate kinase (137 aa).

Residues K10, F58, R86, T92, R103, and N113 each contribute to the ATP site. The Pros-phosphohistidine intermediate role is filled by H116.

The protein belongs to the NDK family. As to quaternary structure, homotetramer. Requires Mg(2+) as cofactor.

The protein localises to the cytoplasm. It catalyses the reaction a 2'-deoxyribonucleoside 5'-diphosphate + ATP = a 2'-deoxyribonucleoside 5'-triphosphate + ADP. The catalysed reaction is a ribonucleoside 5'-diphosphate + ATP = a ribonucleoside 5'-triphosphate + ADP. In terms of biological role, major role in the synthesis of nucleoside triphosphates other than ATP. The ATP gamma phosphate is transferred to the NDP beta phosphate via a ping-pong mechanism, using a phosphorylated active-site intermediate. This Helicobacter pylori (strain Shi470) protein is Nucleoside diphosphate kinase.